A 299-amino-acid polypeptide reads, in one-letter code: Oxygen-dependent coproporphyrinogen-III oxidase (299 aa).

Serine 92 is a substrate binding site. Mn(2+)-binding residues include histidine 96 and histidine 106. Catalysis depends on histidine 106, which acts as the Proton donor. A substrate-binding site is contributed by 108–110 (NVR). Histidine 145 and histidine 175 together coordinate Mn(2+). An important for dimerization region spans residues 240–275 (YVEFNLVWDRGTLFGLQTGGRTESILMSMPPLVRWE). Residue 258 to 260 (GGR) participates in substrate binding.

The protein belongs to the aerobic coproporphyrinogen-III oxidase family. As to quaternary structure, homodimer. Mn(2+) serves as cofactor.

The protein localises to the cytoplasm. It carries out the reaction coproporphyrinogen III + O2 + 2 H(+) = protoporphyrinogen IX + 2 CO2 + 2 H2O. Its pathway is porphyrin-containing compound metabolism; protoporphyrin-IX biosynthesis; protoporphyrinogen-IX from coproporphyrinogen-III (O2 route): step 1/1. Involved in the heme biosynthesis. Catalyzes the aerobic oxidative decarboxylation of propionate groups of rings A and B of coproporphyrinogen-III to yield the vinyl groups in protoporphyrinogen-IX. This is Oxygen-dependent coproporphyrinogen-III oxidase from Escherichia coli O157:H7.